Consider the following 755-residue polypeptide: Dynamin-1-like protein (755 aa).

Residue Met1 is modified to N-acetylmethionine. In terms of domain architecture, Dynamin-type G spans 22–315 (IIQLPQIVVV…LMHHIRDCLP (294 aa)). Residues 32–39 (GTQSSGKS) form a G1 motif region. 32–40 (GTQSSGKSS) is a GTP binding site. Residues 58–60 (VTR) form a G2 motif region. Residues 159 to 162 (DLPG) are G3 motif. Residues 228–231 (TKLD) form a G4 motif region. Residues 228–234 (TKLDLMD) and 259–262 (NRSQ) contribute to the GTP site. Residues 258–261 (VNRS) form a G5 motif region. The tract at residues 357 to 502 (YCNTIEGTAK…NEMVHNLVAI (146 aa)) is middle domain. The segment at 461–704 (NYSTQELLRF…NHVKDTLQSE (244 aa)) is interaction with GSK3B. Residues 515 to 582 (ADACGLMNNN…IQDNRRETKN (68 aa)) form a b domain region. A disordered region spans residues 536–610 (ELPSAVSRDK…QEPTTGNWRG (75 aa)). Position 542 is a phosphoserine (Ser542). Residues Lys545 and Lys548 each participate in a glycyl lysine isopeptide (Lys-Gly) (interchain with G-Cter in SUMO) cross-link. Positions 550–567 (PSALAPASQEPSPAASAE) are enriched in low complexity. Ser561 carries the post-translational modification Phosphoserine. Residues 568–581 (ADGKLIQDNRRETK) show a composition bias toward basic and acidic residues. Residues Lys571 and Lys581 each participate in a glycyl lysine isopeptide (Lys-Gly) (interchain with G-Cter in SUMO) cross-link. Over residues 586 to 600 (AGGGIGDGGRIGDGG) the composition is skewed to gly residues. O-linked (GlcNAc) threonine glycosylation is found at Thr604 and Thr605. Lys613 is covalently cross-linked (Glycyl lysine isopeptide (Lys-Gly) (interchain with G-Cter in SUMO)). N6-acetyllysine; alternate is present on Lys616. Lys616 participates in a covalent cross-link: Glycyl lysine isopeptide (Lys-Gly) (interchain with G-Cter in SUMO); alternate. Lys625 is covalently cross-linked (Glycyl lysine isopeptide (Lys-Gly) (interchain with G-Cter in SUMO)). Ser626 carries the post-translational modification Phosphoserine. Residue Lys627 forms a Glycyl lysine isopeptide (Lys-Gly) (interchain with G-Cter in SUMO) linkage. A Phosphoserine; by CDK1 modification is found at Ser635. Phosphoserine; by CAMK1 and PKA is present on Ser656. Cys663 carries the S-nitrosocysteine modification. The region spanning 663–754 (CEVIERLIKS…IIAEIRETHL (92 aa)) is the GED domain. Positions 673-687 (YFLIVRKNIQDSVPK) are important for homodimerization.

It belongs to the TRAFAC class dynamin-like GTPase superfamily. Dynamin/Fzo/YdjA family. As to quaternary structure, homotetramer; dimerizes through the N-terminal GTP-middle region of one molecule binding to the GED domain of another DNM1L molecule. Oligomerizes in a GTP-dependent manner to form membrane-associated tubules with a spiral pattern. Interacts with GSK3B and MARCHF5. Interacts (via the GTPase and B domains) with UBE2I; the interaction promotes sumoylation of DNM1L, mainly in its B domain. Interacts with PPP3CA; the interaction dephosphorylates DNM1L and regulates its transition to mitochondria. Interacts with BCL2L1 isoform BCL-X(L) and CLTA; DNM1L and BCL2L1 isoform BCL-X(L) may form a complex in synaptic vesicles that also contains clathrin and MFF. Interacts with MFF; the interaction is inhinited by C11orf65/MFI. Interacts with FIS1. Interacts with MIEF2 and MIEF1; GTP-dependent this regulates GTP hydrolysis and DNM1L oligomerization. Interacts with PGAM5; this interaction leads to dephosphorylation at Ser-656 and activation of GTPase activity and eventually to mitochondria fragmentation. Interacts with RALBP1; during mitosis, recruits DNM1L to the mitochondrion and mediates its activation by the mitotic kinase cyclin B-CDK1. Interacts with FUNDC1; this interaction recruits DNM1L/DRP1 at ER-mitochondria contact sites. Post-translationally, phosphorylation/dephosphorylation events on two sites near the GED domain regulate mitochondrial fission. Phosphorylation on Ser-656 by CAMK1 and PKA inhibits the GTPase activity, leading to a defect in mitochondrial fission promoting mitochondrial elongation. Dephosphorylated on this site by PPP3CA which promotes mitochondrial fission. Phosphorylation on Ser-635 by PINK1 activates the GTPase activity and promotes mitochondrial fission. Phosphorylation on Ser-635 by CDK1 also promotes mitochondrial fission. Phosphorylated in a circadian manner at Ser-656. Dephosphorylated by PGAM5. Sumoylated on various lysine residues within the B domain, probably by MUL1. Sumoylation positively regulates mitochondrial fission. Desumoylated by SENP5 during G2/M transition of mitosis. Appears to be linked to its catalytic activity. In terms of processing, S-nitrosylation increases DNM1L dimerization, mitochondrial fission and causes neuronal damage. Post-translationally, O-GlcNAcylation augments the level of the GTP-bound active form of DNM1L and induces translocation from the cytoplasm to mitochondria in cardiomyocytes. It also decreases phosphorylation at Ser-656. Ubiquitination by MARCHF5 affects mitochondrial morphology. Expressed in all tissues tested (at protein level). Longer isoforms are preferentially expressed in brain.

It localises to the cytoplasm. It is found in the cytosol. Its subcellular location is the golgi apparatus. The protein localises to the endomembrane system. The protein resides in the mitochondrion outer membrane. It localises to the peroxisome. It is found in the membrane. Its subcellular location is the clathrin-coated pit. The protein localises to the cytoplasmic vesicle. The protein resides in the secretory vesicle. It localises to the synaptic vesicle membrane. It carries out the reaction GTP + H2O = GDP + phosphate + H(+). Functionally, functions in mitochondrial and peroxisomal division. Mediates membrane fission through oligomerization into membrane-associated tubular structures that wrap around the scission site to constrict and sever the mitochondrial membrane through a GTP hydrolysis-dependent mechanism. The specific recruitment at scission sites is mediated by membrane receptors like MFF, MIEF1 and MIEF2 for mitochondrial membranes. While the recruitment by the membrane receptors is GTP-dependent, the following hydrolysis of GTP induces the dissociation from the receptors and allows DNM1L filaments to curl into closed rings that are probably sufficient to sever a double membrane. Acts downstream of PINK1 to promote mitochondrial fission in a PRKN-dependent manner. Plays an important role in mitochondrial fission during mitosis. Through its function in mitochondrial division, ensures the survival of at least some types of postmitotic neurons, including Purkinje cells, by suppressing oxidative damage. Required for normal brain development, including that of cerebellum. Facilitates developmentally regulated apoptosis during neural tube formation. Required for a normal rate of cytochrome c release and caspase activation during apoptosis; this requirement may depend upon the cell type and the physiological apoptotic cues. Required for formation of endocytic vesicles. Proposed to regulate synaptic vesicle membrane dynamics through association with BCL2L1 isoform Bcl-X(L) which stimulates its GTPase activity in synaptic vesicles; the function may require its recruitment by MFF to clathrin-containing vesicles. Required for programmed necrosis execution. Rhythmic control of its activity following phosphorylation at Ser-656 is essential for the circadian control of mitochondrial ATP production. The chain is Dynamin-1-like protein from Rattus norvegicus (Rat).